A 386-amino-acid chain; its full sequence is Cysteine protease Amb a 11.0101 (386 aa).

The signal sequence occupies residues 1–22 (MEINKLVCFSFSLVLILGLVES). A T-cell epitope. MHC class II peptide able to activate CD(4+) T cells of the ragweed pollen-allergic patients indicated by significantly increased IL-2 production compared to non-allergic individuals. Not recognized by IgE of the patients allergic to ragweed pollen region spans residues 6 to 20 (LVCFSFSLVLILGLV). The propeptide at 23-108 (FHYHERELES…SKISHFQALR (86 aa)) is activation peptide. A glycan (N-linked (GlcNAc...) (complex) asparagine) is linked at N127. 3 disulfide bridges follow: C152–C193, C186–C226, and C283–C334. C155 is a catalytic residue. Residues 173-186 (GKLVKFSEQQLVDC) are B-cell epitope. Binds to IgE of the patients allergic to ragweed pollen. Catalysis depends on residues H289 and N310. The disordered stretch occupies residues 340–377 (SSFPIMNDPNPPKDDPNGPKDDPDAPKDPKFKTTQRLQ). Positions 350 to 370 (PPKDDPNGPKDDPDAPKDPKF) are enriched in basic and acidic residues. Positions 371–386 (KTTQRLQGIRTKLLEL) are cleaved as a propeptide — removed in mature form.

It belongs to the peptidase C1 family. As to quaternary structure, homodimer. Post-translationally, autocatalytic proteolytic cleavage of N-terminal activation peptide. N-glycosylated. Glycosylation is not required for binding to IgE. As to expression, expressed in pollen (at protein and mRNA level).

With respect to regulation, activated by L-cysteine. Inhibited by cysteine protease inhibitor E64 (L-trans-epoxysuccinyl-leucylamide-(4-guanido)-butane). Inhibited by cysteine/serine protease inhibitor leupeptin. Not inhibited by serine protease inhibitors 4-(2-aminoethyl)benzenesulfonyl fluoride hydrochloride (AEBSF) and phenylmethanesulfonyl fluoride (PMSF), metallo protease inhibitor bestatin or aspartic protease inhibitor pepstatin A. In terms of biological role, cysteine protease. Hydrolyzes casein and synthetic peptide Boc-Val-Leu-Lys-7-amino-4-methylcoumarin (Boc-VLK-AMC) in vitro. This Ambrosia artemisiifolia (Common ragweed) protein is Cysteine protease Amb a 11.0101.